The primary structure comprises 278 residues: Large ribosomal subunit protein uL2 (278 aa).

The segment at 225–278 (MNPVDHPHGGGEGRTSGGRHPVTPWGKPTKGKKTRANKATDKYIVRSRHQKKKG) is disordered. The segment covering 269 to 278 (VRSRHQKKKG) has biased composition (basic residues).

This sequence belongs to the universal ribosomal protein uL2 family. As to quaternary structure, part of the 50S ribosomal subunit. Forms a bridge to the 30S subunit in the 70S ribosome.

Functionally, one of the primary rRNA binding proteins. Required for association of the 30S and 50S subunits to form the 70S ribosome, for tRNA binding and peptide bond formation. It has been suggested to have peptidyltransferase activity; this is somewhat controversial. Makes several contacts with the 16S rRNA in the 70S ribosome. This is Large ribosomal subunit protein uL2 from Parvibaculum lavamentivorans (strain DS-1 / DSM 13023 / NCIMB 13966).